Consider the following 389-residue polypeptide: tRNA-specific 2-thiouridylase MnmA (389 aa).

ATP-binding positions include 9–16 (GMSGGVDS) and M35. Positions 95–97 (NPD) are interaction with target base in tRNA. The active-site Nucleophile is C100. The cysteines at positions 100 and 196 are disulfide-linked. G124 lines the ATP pocket. The interval 146-148 (KDQ) is interaction with tRNA. The active-site Cysteine persulfide intermediate is C196. The interval 308 to 309 (RY) is interaction with tRNA.

Belongs to the MnmA/TRMU family.

It is found in the cytoplasm. It catalyses the reaction S-sulfanyl-L-cysteinyl-[protein] + uridine(34) in tRNA + AH2 + ATP = 2-thiouridine(34) in tRNA + L-cysteinyl-[protein] + A + AMP + diphosphate + H(+). Its function is as follows. Catalyzes the 2-thiolation of uridine at the wobble position (U34) of tRNA, leading to the formation of s(2)U34. The sequence is that of tRNA-specific 2-thiouridylase MnmA from Burkholderia ambifaria (strain MC40-6).